Consider the following 656-residue polypeptide: Phosphatidylinositol 4,5-bisphosphate-binding protein SLM2 (656 aa).

Residues 445 to 555 (FEVKSGFLEK…WFGNIKALSS (111 aa)) enclose the PH domain. Residues 577-605 (AKSNENTTESVTPQVTNEQHTRYDDVSSS) form a disordered region. Positions 580 to 594 (NENTTESVTPQVTNE) are enriched in polar residues. Ser-626 carries the post-translational modification Phosphoserine. A PXIXIT-like, required for interaction with CNA1 and CNA2, and calcineurin-dependent dephosphorylation motif is present at residues 640–645 (PEFYIE). A phosphoserine mark is found at Ser-649 and Ser-653.

Heterodimer of SLM1-SLM2. Binds phosphatidylinositol 4,5-bisphosphate, which is required for function. Interacts with the TORC2 subunits AVO2, BIT61 and TOR2. Interacts with the calcineurin catalytic subunits CNA1 and CNA2.

Its subcellular location is the cell membrane. Together with SLM1, effector of the TORC2- and calcineurin-signaling pathways. Phosphorylated and activated by TORC2 under favorable growth conditions. Mediates actin polarization via inhibition of calcineurin-dependent transcription. Upon nutrient limitation or environmental stress, gets dephosphorylated by calcineurin, inhibiting interaction with TORC2, thereby antagonizing TORC2 signaling and mediating calcineurin-dependent actin depolarization. Also functions in heat-induced, calcineurin-mediated uracil permease (FUR4) endocytosis. This is Phosphatidylinositol 4,5-bisphosphate-binding protein SLM2 (SLM2) from Saccharomyces cerevisiae (strain ATCC 204508 / S288c) (Baker's yeast).